The following is a 289-amino-acid chain: Aquaporin PIP1-1 (289 aa).

A disordered region spans residues 1-36 (MEGKEEDVRLGANRYSERQPIGTAAQGAGDDKDYKE). Transmembrane regions (helical) follow at residues 58–78 (IAEFVATFLFLYITILTVMGV) and 93–115 (IAWSFGGMIFALVYCTAGISGGH). The NPA 1 motif lies at 117–119 (NPA). A run of 3 helical transmembrane segments spans residues 136-156 (IFYIVMQCLGAICGAGVVKGF), 178-198 (GDGLGAEIVGTFILVYTVFSA), and 212-232 (ILAPLPIGFAVFLVHLATIPI). Residues 238 to 240 (NPA) carry the NPA 2 motif. A helical membrane pass occupies residues 260–280 (IFWVGPFVGAALAAIYHQVII).

This sequence belongs to the MIP/aquaporin (TC 1.A.8) family. PIP (TC 1.A.8.11) subfamily. As to expression, expressed in roots, leaves and anthers.

The protein resides in the cell membrane. Functionally, may function as water channel to facilitate the transport of water across cell membrane. This chain is Aquaporin PIP1-1 (PIP1-1), found in Oryza sativa subsp. japonica (Rice).